The following is a 252-amino-acid chain: Imidazole glycerol phosphate synthase subunit HisF (252 aa).

Catalysis depends on residues aspartate 11 and aspartate 130.

This sequence belongs to the HisA/HisF family. As to quaternary structure, heterodimer of HisH and HisF.

Its subcellular location is the cytoplasm. It catalyses the reaction 5-[(5-phospho-1-deoxy-D-ribulos-1-ylimino)methylamino]-1-(5-phospho-beta-D-ribosyl)imidazole-4-carboxamide + L-glutamine = D-erythro-1-(imidazol-4-yl)glycerol 3-phosphate + 5-amino-1-(5-phospho-beta-D-ribosyl)imidazole-4-carboxamide + L-glutamate + H(+). It participates in amino-acid biosynthesis; L-histidine biosynthesis; L-histidine from 5-phospho-alpha-D-ribose 1-diphosphate: step 5/9. In terms of biological role, IGPS catalyzes the conversion of PRFAR and glutamine to IGP, AICAR and glutamate. The HisF subunit catalyzes the cyclization activity that produces IGP and AICAR from PRFAR using the ammonia provided by the HisH subunit. This Alkaliphilus metalliredigens (strain QYMF) protein is Imidazole glycerol phosphate synthase subunit HisF.